A 347-amino-acid polypeptide reads, in one-letter code: MNPLIFPIIMLTIMLGTLIVMISSHWLMIWMGFEMNMLAVIPVLMKQYNPRSMEAATKYFLTQATASMLLMLAIVINLLHSGQWTFTKLMDPTASIIMTLALTMKLGLAPFHFWVPEVTQGVSLTSGLVLLTWQKLAPLSVLYTIAPVINSDLILTMSILSIMIGGWGGLNQTQLRKILAYSSIAHMGWMTSVLIFNPTMTLLNLLLYILMTSTTFALFMTVSTTTTLSLSHAWNKTPLITTSILIMMLSLGGLPPLTGFLPKWMIIQELTKNDNIILATLMAIAALLSLFFYMRLTYATSLTMFPTTNNMKIKWQFNKIKQMKCLSPLIILSTLTLPLAPAMMILN.

11 consecutive transmembrane segments (helical) span residues 3-23 (PLIF…VMIS), 25-45 (HWLM…PVLM), 59-79 (YFLT…INLL), 96-116 (IIMT…FWVP), 122-142 (VSLT…LSVL), 145-165 (IAPV…IMIG), 178-198 (ILAY…IFNP), 202-222 (LLNL…FMTV), 240-260 (ITTS…LTGF), 276-296 (IILA…YMRL), and 326-346 (LSPL…MMIL).

It belongs to the complex I subunit 2 family. As to quaternary structure, core subunit of respiratory chain NADH dehydrogenase (Complex I) which is composed of 45 different subunits. Interacts with TMEM242.

The protein localises to the mitochondrion inner membrane. The catalysed reaction is a ubiquinone + NADH + 5 H(+)(in) = a ubiquinol + NAD(+) + 4 H(+)(out). Its function is as follows. Core subunit of the mitochondrial membrane respiratory chain NADH dehydrogenase (Complex I) which catalyzes electron transfer from NADH through the respiratory chain, using ubiquinone as an electron acceptor. Essential for the catalytic activity and assembly of complex I. The protein is NADH-ubiquinone oxidoreductase chain 2 of Peropteryx macrotis (Lesser dog-like bat).